We begin with the raw amino-acid sequence, 535 residues long: UDP-glucuronosyltransferase 1A1 (535 aa).

Residues 1 to 29 (MSVVCRSSCSLLLLPCLLLCVLGPSASHA) form the signal peptide. N-linked (GlcNAc...) asparagine glycans are attached at residues N89, N297, and N435. The helical transmembrane segment at 493–509 (VIGFLLAIVLTVVFIVY) threads the bilayer.

This sequence belongs to the UDP-glycosyltransferase family. In terms of assembly, homodimers. Homooligomer. Interacts with UGT1A3, UGT1A4, UGT1A6, UGT1A7, UGT1A8, UGT1A9 and UGT1A10 to form heterodimers.

Its subcellular location is the endoplasmic reticulum membrane. The catalysed reaction is glucuronate acceptor + UDP-alpha-D-glucuronate = acceptor beta-D-glucuronoside + UDP + H(+). It catalyses the reaction 17beta-estradiol + UDP-alpha-D-glucuronate = 17beta-estradiol 3-O-(beta-D-glucuronate) + UDP + H(+). It carries out the reaction 2-hydroxyestrone + UDP-alpha-D-glucuronate = 2-hydroxyestrone 3-O-(beta-D-glucuronate) + UDP + H(+). The enzyme catalyses 2-hydroxy-17beta-estradiol + UDP-alpha-D-glucuronate = 2-hydroxy-17beta-estradiol 3-O-(beta-D-glucuronate) + UDP + H(+). The catalysed reaction is 2-methoxy-17beta-estradiol + UDP-alpha-D-glucuronate = 2-methoxy-17beta-estradiol 3-O-(beta-D-glucuronate) + UDP + H(+). It catalyses the reaction 17alpha-estradiol + UDP-alpha-D-glucuronate = 17alpha-estradiol 3-O-(beta-D-glucuronate) + UDP + H(+). It carries out the reaction 16beta,17beta-estriol + UDP-alpha-D-glucuronate = 16beta,17beta-estriol 16-O-(beta-D-glucuronate) + UDP + H(+). The enzyme catalyses losartan + UDP-alpha-D-glucuronate = losartan-2-N-beta-D-glucuronide + UDP. The catalysed reaction is prunetin + UDP-alpha-D-glucuronate = prunetin-4'-O-beta-D-glucuronide + UDP. It catalyses the reaction SN-38 + UDP-alpha-D-glucuronate = SN-38 O-beta-D-glucuronide + UDP + H(+). It carries out the reaction (4Z,15Z)-bilirubin IXalpha + UDP-alpha-D-glucuronate = (4Z,15Z)-bilirubin IXalpha C12-beta-D-glucuronoside + UDP. The enzyme catalyses (4Z,15Z)-bilirubin IXalpha + UDP-alpha-D-glucuronate = (4Z,15Z)-bilirubin IXalpha C8-beta-D-glucuronoside + UDP. The catalysed reaction is (4Z,15Z)-bilirubin IXalpha C8-beta-D-glucuronoside + UDP-alpha-D-glucuronate = (4Z,15Z)-bilirubin IXalpha C8,C12-beta-D-bisglucuronoside + UDP. It catalyses the reaction (4Z,15Z)-bilirubin IXalpha C12-beta-D-glucuronoside + UDP-alpha-D-glucuronate = (4Z,15Z)-bilirubin IXalpha C8,C12-beta-D-bisglucuronoside + UDP. It carries out the reaction 8-iso-prostaglandin F2alpha + UDP-alpha-D-glucuronate = 8-iso-prostaglandin F2alpha-glucuronide + UDP + H(+). The enzyme catalyses (5Z,8Z,11Z,14Z)-eicosatetraenoate + UDP-alpha-D-glucuronate = O-[(5Z),(8Z),(11Z),(14Z)-eicosatetraenoyl]-beta-D-glucuronate + UDP. The catalysed reaction is 15-hydroxy-(5Z,8Z,11Z,13E)-eicosatetraenoate + UDP-alpha-D-glucuronate = 15-O-(beta-D-glucuronosyl)-(5Z,8Z,11Z,14Z)-eicosatetraenoate + UDP + H(+). It catalyses the reaction 20-hydroxy-(5Z,8Z,11Z,14Z)-eicosatetraenoate + UDP-alpha-D-glucuronate = 20-O-(beta-D-glucuronosyl)-(5Z,8Z,11Z,14Z)-eicosatetraenoate + UDP + H(+). It carries out the reaction prostaglandin B1 + UDP-alpha-D-glucuronate = 15-O-(beta-D-glucuronosyl)-prostaglandin B1 + UDP + H(+). The enzyme catalyses (E)-ferulate + UDP-alpha-D-glucuronate = (E)-4-O-(beta-D-glucuronosyl)-ferulate + UDP + H(+). The catalysed reaction is (E)-ferulate + UDP-alpha-D-glucuronate = (E)-ferulic acid beta-D-glucuronate ester + UDP. UDP-glucuronosyltransferase (UGT) that catalyzes phase II biotransformation reactions in which lipophilic substrates are conjugated with glucuronic acid to increase the metabolite's water solubility, thereby facilitating excretion into either the urine or bile. Essential for the elimination and detoxification of drugs, xenobiotics and endogenous compounds. Catalyzes the glucuronidation of endogenous estrogen hormones such as estradiol, estrone and estriol. Involved in the glucuronidation of bilirubin, a degradation product occurring in the normal catabolic pathway that breaks down heme in vertebrates. Involved in the glucuronidation of arachidonic acid (AA) and AA-derived eicosanoids including 15-HETE, 20-HETE, PGB1 and F2-isoprostane (8-iso-PGF2alpha). Involved in the glucuronidation of the phytochemical ferulic acid at the phenolic or the carboxylic acid group. Also catalyzes the glucuronidation the isoflavones genistein, daidzein, glycitein, formononetin, biochanin A and prunetin, which are phytoestrogens with anticancer and cardiovascular properties. Involved in the glucuronidation of the AGTR1 angiotensin receptor antagonist losartan, a drug which can inhibit the effect of angiotensin II. Involved in the biotransformation of 7-ethyl-10-hydroxycamptothecin (SN-38), the pharmacologically active metabolite of the anticancer drug irinotecan. The chain is UDP-glucuronosyltransferase 1A1 from Rattus norvegicus (Rat).